Here is a 322-residue protein sequence, read N- to C-terminus: uncharacterized protein (322 aa).

This sequence to M.jannaschii MJ0640 and MJ0799.

This is an uncharacterized protein from Synechocystis sp. (strain ATCC 27184 / PCC 6803 / Kazusa).